A 196-amino-acid polypeptide reads, in one-letter code: Small ribosomal subunit protein uS4c (196 aa).

Residues 89–149 (MRLDNILFRL…DKQRSKALIQ (61 aa)) enclose the S4 RNA-binding domain.

It belongs to the universal ribosomal protein uS4 family. In terms of assembly, part of the 30S ribosomal subunit. Contacts protein S5. The interaction surface between S4 and S5 is involved in control of translational fidelity.

Its subcellular location is the plastid. The protein localises to the chloroplast. Its function is as follows. One of the primary rRNA binding proteins, it binds directly to 16S rRNA where it nucleates assembly of the body of the 30S subunit. With S5 and S12 plays an important role in translational accuracy. This is Small ribosomal subunit protein uS4c (rps4) from Asparagus maritimus (Sea asparagus).